The primary structure comprises 280 residues: Ribosomal RNA small subunit methyltransferase A (280 aa).

Histidine 15, leucine 17, glycine 42, glutamate 64, aspartate 89, and asparagine 109 together coordinate S-adenosyl-L-methionine.

This sequence belongs to the class I-like SAM-binding methyltransferase superfamily. rRNA adenine N(6)-methyltransferase family. RsmA subfamily.

The protein resides in the cytoplasm. The catalysed reaction is adenosine(1518)/adenosine(1519) in 16S rRNA + 4 S-adenosyl-L-methionine = N(6)-dimethyladenosine(1518)/N(6)-dimethyladenosine(1519) in 16S rRNA + 4 S-adenosyl-L-homocysteine + 4 H(+). In terms of biological role, specifically dimethylates two adjacent adenosines (A1518 and A1519) in the loop of a conserved hairpin near the 3'-end of 16S rRNA in the 30S particle. May play a critical role in biogenesis of 30S subunits. In Prochlorococcus marinus (strain MIT 9313), this protein is Ribosomal RNA small subunit methyltransferase A.